A 206-amino-acid polypeptide reads, in one-letter code: Thymidylate kinase (206 aa).

7 to 14 (GGEGVGKT) contributes to the ATP binding site.

Belongs to the thymidylate kinase family.

The catalysed reaction is dTMP + ATP = dTDP + ADP. Functionally, phosphorylation of dTMP to form dTDP in both de novo and salvage pathways of dTTP synthesis. The polypeptide is Thymidylate kinase (Synechococcus sp. (strain JA-2-3B'a(2-13)) (Cyanobacteria bacterium Yellowstone B-Prime)).